Reading from the N-terminus, the 857-residue chain is MMVRLSPLMEQYSRIKQQCPDALLLFRVGDFYETFGEDAITTSRTLNITLTSRQKDDEGNRIPLAGIPYHSLDVYLSRLVNAGHKVAICEQVEDPKQAKGIVRREITRIVTPGTVIEPALLQERSNNYLAAVLLENGLAGLSLLDLSTGDFIASEVPVERLGSELARFSPAECLAPPGVSLEGMKFQNLDAELFSLNEASESGGILGDLHKRSPLCARAACAILSYLRETRIQSVDHIKPIRMISSSEYMLLDEITLRNLEIFRNLRDGSRSGTLMEILDETVTPMGSRTLARWLQMPSMSLEVIRRRQDAIEEMVRRAVIREEISELLDGLSDLERIIGRVSLGNAGPKDLVALRSSLRRIPEIAHAMSALESEYLVEIRKRLDASELDDLVVLLERALSDDPPTSPRDGGVIRDGYSPELDEIRSALRNGRSWIAELESSERKRTGIKSLKVGYNNVFGYYIEVTKPNLSMVPDDYIRKQTLSNAERFVTRELKEVESRVLSAQERSSALEYEVFLDLRGQVASRTRSVQEVAAAIGELDTILGLTRAALMGAMVRPVVDAGREVILRDSRHPVLDRVMKGGFVPNDLTMDESSWFMILTGPNMAGKSTFMRQVALIAIMAQIGSFVPASYAKIGLIDRIFTRVGARDDLVSGRSTFMVEMSELANILVSATKDSLILLDEIGRGTSTFDGLSIAWAVSEYIHSRIKAKTIFATHYHQLTQLNLPGIVNYSMAVKEEGRSITFLRTVVPGATNKSYGIHVARLAGVPEHVIRRAEELLDIIEEQAAIEIRKCRSKERPKRYTQLIFFNQPESIDNDILEEIKNLEPEKITPLQALNLLVEYRRRLGCKDAKDTHT.

603–610 (GPNMAGKS) provides a ligand contact to ATP.

Belongs to the DNA mismatch repair MutS family.

Functionally, this protein is involved in the repair of mismatches in DNA. It is possible that it carries out the mismatch recognition step. This protein has a weak ATPase activity. The polypeptide is DNA mismatch repair protein MutS (Methanothrix thermoacetophila (strain DSM 6194 / JCM 14653 / NBRC 101360 / PT) (Methanosaeta thermophila)).